We begin with the raw amino-acid sequence, 179 residues long: MSNIHYIKGNILKGRTYKRIIIHSCNANGAWGGGIAYQLAVKHPKAEEVYVDLCERFGQKLLGKCVVIPSYSDDDVLIGCLFTSIFGGASHGSGTSIVDYTDKALSHFDELLAKEQSKSDNANLDKEIEKLLKLKSGVLKDYKLEMPKINSGIFGVPWPETEEVLKKYDRSMNFTVYEL.

Residues 1-179 (MSNIHYIKGN…RSMNFTVYEL (179 aa)) form the Macro domain. Residues 9–11 (GNI), 24–26 (SCN), 31–36 (WGGGIA), and 149–155 (INSGIFG) contribute to the substrate site.

The protein belongs to the POA1 family.

The catalysed reaction is ADP-alpha-D-ribose 1''-phosphate + H2O = ADP-D-ribose + phosphate. Its function is as follows. Highly specific phosphatase involved in the metabolism of ADP-ribose 1''-phosphate (Appr1p) which is produced as a consequence of tRNA splicing. In Candida glabrata (strain ATCC 2001 / BCRC 20586 / JCM 3761 / NBRC 0622 / NRRL Y-65 / CBS 138) (Yeast), this protein is ADP-ribose 1''-phosphate phosphatase (POA1).